The sequence spans 465 residues: Argininosuccinate lyase (465 aa).

It belongs to the lyase 1 family. Argininosuccinate lyase subfamily.

The protein localises to the cytoplasm. It carries out the reaction 2-(N(omega)-L-arginino)succinate = fumarate + L-arginine. It functions in the pathway amino-acid biosynthesis; L-arginine biosynthesis; L-arginine from L-ornithine and carbamoyl phosphate: step 3/3. The sequence is that of Argininosuccinate lyase from Bradyrhizobium diazoefficiens (strain JCM 10833 / BCRC 13528 / IAM 13628 / NBRC 14792 / USDA 110).